A 66-amino-acid chain; its full sequence is Large ribosomal subunit protein bL33c (66 aa).

This sequence belongs to the bacterial ribosomal protein bL33 family.

The protein localises to the plastid. Its subcellular location is the chloroplast. This is Large ribosomal subunit protein bL33c from Lobularia maritima (Sweet alyssum).